The primary structure comprises 293 residues: Formamidopyrimidine-DNA glycosylase (293 aa).

Pro-2 functions as the Schiff-base intermediate with DNA in the catalytic mechanism. Glu-3 serves as the catalytic Proton donor. Lys-58 functions as the Proton donor; for beta-elimination activity in the catalytic mechanism. DNA is bound by residues His-104, Arg-123, and Arg-166. Residues 257–293 (AVYDREGEPCRSKGCDGVVKRFVQNGRSTFWCPKCQK) form an FPG-type zinc finger. Arg-283 serves as the catalytic Proton donor; for delta-elimination activity.

This sequence belongs to the FPG family. In terms of assembly, monomer. Zn(2+) serves as cofactor.

The enzyme catalyses Hydrolysis of DNA containing ring-opened 7-methylguanine residues, releasing 2,6-diamino-4-hydroxy-5-(N-methyl)formamidopyrimidine.. It carries out the reaction 2'-deoxyribonucleotide-(2'-deoxyribose 5'-phosphate)-2'-deoxyribonucleotide-DNA = a 3'-end 2'-deoxyribonucleotide-(2,3-dehydro-2,3-deoxyribose 5'-phosphate)-DNA + a 5'-end 5'-phospho-2'-deoxyribonucleoside-DNA + H(+). In terms of biological role, involved in base excision repair of DNA damaged by oxidation or by mutagenic agents. Acts as a DNA glycosylase that recognizes and removes damaged bases. Has a preference for oxidized purines, such as 7,8-dihydro-8-oxoguanine (8-oxoG). Has AP (apurinic/apyrimidinic) lyase activity and introduces nicks in the DNA strand. Cleaves the DNA backbone by beta-delta elimination to generate a single-strand break at the site of the removed base with both 3'- and 5'-phosphates. This Rhodopseudomonas palustris (strain BisB18) protein is Formamidopyrimidine-DNA glycosylase.